We begin with the raw amino-acid sequence, 346 residues long: MKPRIVLKSSSLMPSWDRPVLPGAPGCELAGGVARAHPIKHGVVVDWDALEGLWERLMVGGLQVHPEQWPVLVSDSPSAPPKGREKVAELLFEALTVPACHMANTALLALCSIGAFSGLAVEAGAGVCHATPIYAGHSWHKATFRLNVAGSTLSRYFRDLLVAACPDLQLQGLSRKTVTQLKKRCCYVSLDFQGDICDPARHQRACFCLGNGCYVRLGSERFRCPEPIFQPSLLGHPEPGLPTLAFQALQKIPTTLRTRLANTVVLAGGSTLFPGFVERMNLELEAQCRRHGYPALQPCLVAHPGRDTAVWTGGSMMASLNSFQCRWMTRAMYQEHGPLLVRDVFD.

This sequence belongs to the actin family.

This is Actin-like protein 10 (Actl10) from Mus musculus (Mouse).